Consider the following 135-residue polypeptide: MLSPKRVKWRKQFVGRATGFAVRGANLDFGDYGLQAVEEGRLTARQLEAGRIAISRSVKRGGKIWCRVFPNIPVTKKPAETRMGSGKGNPELWVARVLPGKVLFEMNGVTREQAKEAFERAAHKLPFKTRFLVRE.

This sequence belongs to the universal ribosomal protein uL16 family. As to quaternary structure, part of the 50S ribosomal subunit.

Functionally, binds 23S rRNA and is also seen to make contacts with the A and possibly P site tRNAs. The protein is Large ribosomal subunit protein uL16 of Bdellovibrio bacteriovorus (strain ATCC 15356 / DSM 50701 / NCIMB 9529 / HD100).